The following is a 55-amino-acid chain: Small integral membrane protein 27 (55 aa).

The helical transmembrane segment at 11-31 (WIYSVLLLAIVLISWGCIIYA) threads the bilayer.

The protein resides in the membrane. The protein is Small integral membrane protein 27 of Homo sapiens (Human).